The following is an 880-amino-acid chain: Translation initiation factor IF-2 (880 aa).

The disordered stretch occupies residues 1–251 (MVDTKNPGDK…PTAKPAPAKQ (251 aa)). Residues 58 to 79 (PADAPAAPAPVAAAKPAPVRAP) show a composition bias toward low complexity. The span at 115-183 (ARIRDEEERK…KRFGEEEAKK (69 aa)) shows a compositional bias: basic and acidic residues. Composition is skewed to low complexity over residues 184-215 (AAAAAPAKTTAATTATAAKPGAPARAPGVAAD) and 233-250 (AARPVVAPKPTAKPAPAK). The tr-type G domain maps to 376 to 547 (PRSPVVTVMG…ALQAELLDLK (172 aa)). Residues 385-392 (GHVDHGKT) are G1. A GTP-binding site is contributed by 385–392 (GHVDHGKT). Residues 410 to 414 (GITQH) form a G2 region. The G3 stretch occupies residues 433–436 (DTPG). GTP contacts are provided by residues 433–437 (DTPGH) and 487–490 (NKID). A G4 region spans residues 487-490 (NKID). Residues 523-525 (SAK) form a G5 region.

This sequence belongs to the TRAFAC class translation factor GTPase superfamily. Classic translation factor GTPase family. IF-2 subfamily.

Its subcellular location is the cytoplasm. In terms of biological role, one of the essential components for the initiation of protein synthesis. Protects formylmethionyl-tRNA from spontaneous hydrolysis and promotes its binding to the 30S ribosomal subunits. Also involved in the hydrolysis of GTP during the formation of the 70S ribosomal complex. The chain is Translation initiation factor IF-2 from Rhodopseudomonas palustris (strain BisB18).